The sequence spans 106 residues: Defensin-like protein 1 (106 aa).

The signal sequence occupies residues 1–25; that stretch reads MARSLCFMAFAVLAMMLFVAYEVQA. 4 disulfides stabilise this stretch: cysteine 29-cysteine 73, cysteine 40-cysteine 60, cysteine 46-cysteine 67, and cysteine 50-cysteine 69.

This sequence belongs to the DEFL family.

The protein localises to the secreted. It is found in the vacuole. The protein is Defensin-like protein 1 (THIO1) of Nicotiana paniculata.